The sequence spans 434 residues: Forkhead box protein A2-A (434 aa).

Residues 149 to 243 (KPPYSYISLI…ENGCYLRRQK (95 aa)) constitute a DNA-binding region (fork-head). Positions 249-262 (KKPSLREGGGKKLS) are enriched in basic and acidic residues. Disordered stretches follow at residues 249–339 (KKPS…QSHL) and 408–434 (SGLE…MNSS). Composition is skewed to low complexity over residues 263–291 (EGAS…SSSP) and 317–333 (ASQA…VLSH). Residues 408–422 (SGLESSPITSDTSYY) are compositionally biased toward polar residues.

In terms of tissue distribution, at gastrula stage, expressed in both the anterior and posterior endoderm, with endodermal expression persisting into early tailbud stages. Expression is absent in gastrula stage ectoderm. During tailbud stages, expressed in the pharyngeal region, the neural floor plate, the midbrain, hindbrain and in cranial neural crest cells. Expressed in the foregut of hatching larvae. In tadpoles, expressed in the pharyngeal pouches and in other anterior endodermal regions. Within the tadpole nervous system, expressed in the neural floor plate, at high levels in the ventral midbrain and hindbrain, and at lower levels in the spinal cord. Expressed in the adult lung and brain.

It is found in the nucleus. In terms of biological role, acts as a transcriptional activator during early development, limiting the extent of mesoderm formation in the gastrula. Binds to DNA via the target sequence 5'-GT[AC]AACA-3', with 5'-GTAAACA-3' being the preferred binding site. In Xenopus laevis (African clawed frog), this protein is Forkhead box protein A2-A (foxa2-a).